The chain runs to 40 residues: Large ribosomal subunit protein bL36B (40 aa).

This sequence belongs to the bacterial ribosomal protein bL36 family.

The sequence is that of Large ribosomal subunit protein bL36B from Kocuria rhizophila (strain ATCC 9341 / DSM 348 / NBRC 103217 / DC2201).